We begin with the raw amino-acid sequence, 486 residues long: Ribosomal RNA small subunit methyltransferase F (486 aa).

S-adenosyl-L-methionine contacts are provided by residues 124 to 130, Glu148, Asp175, and Asp193; that span reads ASAPGSK. Cys246 acts as the Nucleophile in catalysis.

The protein belongs to the class I-like SAM-binding methyltransferase superfamily. RsmB/NOP family.

The protein resides in the cytoplasm. It carries out the reaction cytidine(1407) in 16S rRNA + S-adenosyl-L-methionine = 5-methylcytidine(1407) in 16S rRNA + S-adenosyl-L-homocysteine + H(+). Functionally, specifically methylates the cytosine at position 1407 (m5C1407) of 16S rRNA. The chain is Ribosomal RNA small subunit methyltransferase F from Shewanella baltica (strain OS195).